The primary structure comprises 164 residues: Ubiquitin-fold modifier-conjugating enzyme 1 (164 aa).

Residue cysteine 116 is the Glycyl thioester intermediate of the active site.

Belongs to the ubiquitin-conjugating enzyme family. UFC1 subfamily.

Functionally, E2-like enzyme which forms an intermediate with UFM1 via a thioester linkage. In Drosophila persimilis (Fruit fly), this protein is Ubiquitin-fold modifier-conjugating enzyme 1.